Reading from the N-terminus, the 684-residue chain is Sec1 family domain-containing protein 2 (684 aa).

Belongs to the STXBP/unc-18/SEC1 family.

In terms of biological role, may be involved in protein transport. The chain is Sec1 family domain-containing protein 2 (SCFD2) from Homo sapiens (Human).